The following is a 179-amino-acid chain: Large ribosomal subunit protein uL5 (179 aa).

This sequence belongs to the universal ribosomal protein uL5 family. Part of the 50S ribosomal subunit; part of the 5S rRNA/L5/L18/L25 subcomplex. Contacts the 5S rRNA and the P site tRNA. Forms a bridge to the 30S subunit in the 70S ribosome.

This is one of the proteins that bind and probably mediate the attachment of the 5S RNA into the large ribosomal subunit, where it forms part of the central protuberance. In the 70S ribosome it contacts protein S13 of the 30S subunit (bridge B1b), connecting the 2 subunits; this bridge is implicated in subunit movement. Contacts the P site tRNA; the 5S rRNA and some of its associated proteins might help stabilize positioning of ribosome-bound tRNAs. This is Large ribosomal subunit protein uL5 from Pseudomonas fluorescens (strain SBW25).